The sequence spans 419 residues: Interferon regulatory factor 3 (419 aa).

Threonine 3 carries the phosphothreonine modification. The segment at residues 5–111 (KPRILPWLVS…DPHKVYEFVT (107 aa)) is a DNA-binding region (IRF tryptophan pentad repeat). Serine 14 is subject to Phosphoserine. Threonine 75 bears the Phosphothreonine mark. Residues serine 97, serine 123, and serine 135 each carry the phosphoserine modification. The interval 140–419 (PKLFDGLILG…DMDFQATGNI (280 aa)) is mediates interaction with ZDHHC11. A Glycyl lysine isopeptide (Lys-Gly) (interchain with G-Cter in ISG15) cross-link involves residue lysine 188. The interval 194 to 353 (EQWEFEVTAF…MWPQDQPWVK (160 aa)) is interaction with HERC5. Threonine 230, threonine 237, and threonine 246 each carry phosphothreonine. Glycyl lysine isopeptide (Lys-Gly) (interchain with G-Cter in ISG15) cross-links involve residues lysine 353 and lysine 359. An N6-acetyllysine modification is found at lysine 359. Serine 378 carries the phosphoserine modification. Serine 379 carries the diphosphoserine modification. Serine 379 is subject to Phosphoserine; by TBK1. The residue at position 388 (serine 388) is a Phosphoserine; by IKKE. At serine 390 the chain carries Phosphoserine. Residue threonine 396 is modified to Phosphothreonine.

It belongs to the IRF family. As to quaternary structure, monomer. Homodimer; phosphorylation-induced. Interacts (when phosphorylated) with CREBBP. Interacts with MAVS (via phosphorylated pLxIS motif). Interacts with TICAM1 (via phosphorylated pLxIS motif). Interacts with STING1 (via phosphorylated pLxIS motif). Interacts with IKBKE and TBK1. Interacts with TICAM2. Interacts with RBCK1. Interacts with HERC5. Interacts with DDX3X; the interaction allows the phosphorylation and activation of IRF3 by IKBKE. Interacts with TRIM21 and ULK1, in the presence of TRIM21; this interaction leads to IRF3 degradation by autophagy. Interacts with RIOK3; RIOK3 probably mediates the interaction of TBK1 with IRF3. Interacts with ILRUN; the interaction inhibits IRF3 binding to its DNA consensus sequence. Interacts with LYAR; this interaction impairs IRF3 DNA-binding activity. Interacts with TRAF3. Interacts with ZDHHC11; ZDHHC11 recruits IRF3 to STING1 upon DNA virus infection and thereby promotes IRF3 activation. Interacts with HSP90AA1; the interaction mediates IRF3 association with TOMM70. Interacts with BCL2; the interaction decreases upon Sendai virus infection. Interacts with BAX; the interaction is direct, increases upon virus infection and mediates the formation of the apoptosis complex TOMM70:HSP90AA1:IRF3:BAX. Interacts with DDX56. Interacts with NBR1. In terms of processing, constitutively phosphorylated on many Ser/Thr residues. Activated following phosphorylation by TBK1 and IKBKE. Innate adapter proteins, such as MAVS, STING1 or TICAM1, are first activated by viral RNA, cytosolic DNA, and bacterial lipopolysaccharide (LPS), respectively, leading to activation of the kinases TBK1 and IKBKE. These kinases then phosphorylate the adapter proteins on the pLxIS motif, leading to recruitment of IRF3, thereby licensing IRF3 for phosphorylation by TBK1. Phosphorylation at Ser-379 is followed by pyrophosphorylation at the same residue, promoting phosphorylation at Ser-388. Phosphorylated IRF3 dissociates from the adapter proteins, dimerizes, and then enters the nucleus to induce IFNs. Post-translationally, pyrophosphorylated by UAP1 following phosphorylation at Ser-379 by TBK1. Pyrophosphorylation promotes subsequent phosphorylation at Ser-388, leading to homodimerization of IRF3. Acetylation at Lys-359 by KAT8 inhibits recruimtent to promoters and transcription factor activity. Acetylation by KAT8 is promoted by phosphorylation at Ser-388. In terms of processing, ubiquitinated; ubiquitination involves RBCK1 leading to proteasomal degradation. Polyubiquitinated; ubiquitination involves TRIM21 leading to proteasomal degradation. Ubiquitinated by UBE3C, leading to its degradation. Deubiquitinated by USP5 on both 'Lys-48'-linked unanchored and 'Lys-63'-linked anchored polyubiquitin, leading to inhibition of anti-RNA viral innate immunity. Post-translationally, ISGylated by HERC5 resulting in sustained IRF3 activation and in the inhibition of IRF3 ubiquitination by disrupting PIN1 binding. The phosphorylation state of IRF3 does not alter ISGylation. Proteolytically cleaved by apoptotic caspases during apoptosis, leading to its inactivation. Cleavage by CASP3 during virus-induced apoptosis inactivates it, preventing cytokine overproduction.

It is found in the cytoplasm. Its subcellular location is the nucleus. It localises to the mitochondrion. In the absence of viral infection, maintained as a monomer in an autoinhibited state. Phosphorylation by TBK1 and IKBKE disrupts this autoinhibition leading to the liberation of the DNA-binding and dimerization activities and its nuclear localization where it can activate type I IFN and ISG genes. Phosphorylation and activation follow the following steps: innate adapter proteins, such as MAVS, STING1 or TICAM1, are first activated by viral RNA, cytosolic DNA and bacterial lipopolysaccharide (LPS), respectively, leading to activation of the kinases TBK1 and IKBKE. These kinases then phosphorylate the adapter proteins on their pLxIS motif, leading to recruitment of IRF3, thereby licensing IRF3 for phosphorylation by TBK1. Phosphorylated IRF3 dissociates from the adapter proteins, dimerizes, and then enters the nucleus to induce IFNs. Key transcriptional regulator of type I interferon (IFN)-dependent immune responses which plays a critical role in the innate immune response against DNA and RNA viruses. Regulates the transcription of type I IFN genes (IFN-alpha and IFN-beta) and IFN-stimulated genes (ISG) by binding to an interferon-stimulated response element (ISRE) in their promoters. Acts as a more potent activator of the IFN-beta (IFNB) gene than the IFN-alpha (IFNA) gene and plays a critical role in both the early and late phases of the IFNA/B gene induction. Found in an inactive form in the cytoplasm of uninfected cells and following viral infection, double-stranded RNA (dsRNA), or toll-like receptor (TLR) signaling, is phosphorylated by IKBKE and TBK1 kinases. This induces a conformational change, leading to its dimerization and nuclear localization and association with CREB binding protein (CREBBP) to form dsRNA-activated factor 1 (DRAF1), a complex which activates the transcription of the type I IFN and ISG genes. Can activate distinct gene expression programs in macrophages and can induce significant apoptosis in primary macrophages. The protein is Interferon regulatory factor 3 (Irf3) of Mus musculus (Mouse).